Consider the following 274-residue polypeptide: 4-diphosphocytidyl-2-C-methyl-D-erythritol kinase (274 aa).

Lys8 is a catalytic residue. ATP is bound at residue 94–104; that stretch reads PSGAGLGGGSA. Asp136 is a catalytic residue.

The protein belongs to the GHMP kinase family. IspE subfamily.

It catalyses the reaction 4-CDP-2-C-methyl-D-erythritol + ATP = 4-CDP-2-C-methyl-D-erythritol 2-phosphate + ADP + H(+). Its pathway is isoprenoid biosynthesis; isopentenyl diphosphate biosynthesis via DXP pathway; isopentenyl diphosphate from 1-deoxy-D-xylulose 5-phosphate: step 3/6. Functionally, catalyzes the phosphorylation of the position 2 hydroxy group of 4-diphosphocytidyl-2C-methyl-D-erythritol. This Bacteroides fragilis (strain ATCC 25285 / DSM 2151 / CCUG 4856 / JCM 11019 / LMG 10263 / NCTC 9343 / Onslow / VPI 2553 / EN-2) protein is 4-diphosphocytidyl-2-C-methyl-D-erythritol kinase.